The following is a 923-amino-acid chain: Protein dct-6 (923 aa).

Residues Asp-312–Gln-347 are a coiled coil.

Functionally, may have a role in tumor suppression. The protein is Protein dct-6 (dct-6) of Caenorhabditis elegans.